We begin with the raw amino-acid sequence, 402 residues long: tRNA pseudouridine synthase Pus10 (402 aa).

The active-site Nucleophile is the Asp215. Residues 370 to 402 (ERGGHPGARGGTRRRPRKGPARPAGGRDRPRKT) form a disordered region. The segment covering 380-389 (GTRRRPRKGP) has biased composition (basic residues).

Belongs to the pseudouridine synthase Pus10 family.

It carries out the reaction uridine(54) in tRNA = pseudouridine(54) in tRNA. It catalyses the reaction uridine(55) in tRNA = pseudouridine(55) in tRNA. Functionally, responsible for synthesis of pseudouridine from uracil-54 and uracil-55 in the psi GC loop of transfer RNAs. In Cenarchaeum symbiosum (strain A), this protein is tRNA pseudouridine synthase Pus10.